We begin with the raw amino-acid sequence, 514 residues long: Transmembrane protein 151B (514 aa).

Residues 1-40 (MSAEGEPAEAVAETPANSPGEEAAAAAATTDVDVREEQRP) form a disordered region. A run of 3 helical transmembrane segments spans residues 57-77 (CLLLSILMFVCLGAVTWCQVT), 104-124 (YVYIPLAFLAMLYVVYLVECW), and 286-306 (PWYVSHYAFWVAALFMLSWPL).

The protein belongs to the TMEM151 family.

Its subcellular location is the membrane. The protein is Transmembrane protein 151B (tmem151b) of Xenopus tropicalis (Western clawed frog).